The sequence spans 769 residues: Intron Large complex component GCFC2 (769 aa).

Disordered regions lie at residues 1–122 and 134–212; these read MALR…PIVE and RKRE…DENQ. Phosphoserine occurs at positions 16, 17, 19, and 85. Thr86 bears the Phosphothreonine mark. A phosphoserine mark is found at Ser118 and Ser169. Residues 190-201 show a composition bias toward basic and acidic residues; that stretch reads RMAEETSIRSEE. The span at 202-212 shows a compositional bias: acidic residues; it reads SSEESQEDENQ. Phosphoserine is present on residues Ser203 and Ser206. Positions 256–308 form a coiled coil; it reads NLEIIKKQLNNRLTLLQESHRSHQREYEKYEQDIKSSKTAIQNLESASDHAQN.

The protein belongs to the GCF family. In terms of assembly, found in the Intron Large (IL) complex, a post-mRNA release spliceosomal complex containing the excised intron, U2, U5 and U6 snRNPs, and splicing factors. Interacts with TFIP11 and DHX15.

Its subcellular location is the nucleus. It is found in the nucleoplasm. It localises to the nucleolus. In terms of biological role, involved in pre-mRNA splicing through regulating spliceosome C complex formation. May play a role during late-stage splicing events and turnover of excised introns. In Mus musculus (Mouse), this protein is Intron Large complex component GCFC2 (Gcfc2).